The chain runs to 459 residues: Glutamate--tRNA ligase 2 (459 aa).

A 'HIGH' region motif is present at residues 8 to 18 (PSPTGYLHIGG). A 'KMSKS' region motif is present at residues 237–241 (KLSKR). K240 contacts ATP.

This sequence belongs to the class-I aminoacyl-tRNA synthetase family. Glutamate--tRNA ligase type 1 subfamily. Monomer.

It localises to the cytoplasm. It catalyses the reaction tRNA(Glu) + L-glutamate + ATP = L-glutamyl-tRNA(Glu) + AMP + diphosphate. Catalyzes the attachment of glutamate to tRNA(Glu) in a two-step reaction: glutamate is first activated by ATP to form Glu-AMP and then transferred to the acceptor end of tRNA(Glu). The protein is Glutamate--tRNA ligase 2 of Campylobacter concisus (strain 13826).